The sequence spans 449 residues: Phosphoglucosamine mutase (449 aa).

Ser-104 (phosphoserine intermediate) is an active-site residue. Mg(2+) is bound by residues Ser-104, Asp-243, Asp-245, and Asp-247. Ser-104 carries the post-translational modification Phosphoserine.

Belongs to the phosphohexose mutase family. Mg(2+) serves as cofactor. Post-translationally, activated by phosphorylation.

The catalysed reaction is alpha-D-glucosamine 1-phosphate = D-glucosamine 6-phosphate. Functionally, catalyzes the conversion of glucosamine-6-phosphate to glucosamine-1-phosphate. This Xanthomonas campestris pv. campestris (strain 8004) protein is Phosphoglucosamine mutase.